The following is a 975-amino-acid chain: MVAINSVSNYLSLLDEDQLELKSYSLEKLDSCVDEFWSEIASSSIDKIKSLSVNKQFPKHELASLVLSKVYYNLSDFPNSMEYALSAGSLFNVLSKSEYIETLLYKFIDEYIKLRTSTNKDTVINPHLESIVMGMFDRCFKEGSYKQALGIAIEARRLDIIEKAISQSGNVNSMLSYCLHICNVSVNNRHFRHSVLGILVNLHLAQEKPDYLSVVQCLIFLDNHIEVATILLSLIKKDEESLLLAYQIGFDLFQNSTQQFLLNVRNRLPPVEKKSTTTTTTTPASDSMEIDIDSGNEKSGGSSSFEQRLERLHSILIGDVSIGMNLEFLYRNCSTDMHILQSMKTTSELHKGAIFYSGTLFANALMHAGTTRDTFLRSNIEWLYKSTHWTKFSAISSLGVINKGHIKESKSLLKTYLPGASVNQTPYSESGSLYALGLIHASHGEEIIDYLVEKLHINNAILHHGASLGLGLAAMATGRDDLYEDLKSVLYNDDAVSGEAAGLAMGLVMLGSGAKKAIEEMLAYAHETQHEKTIRSLSMGLAFLMYGKEESADTLIEQMIGDKDPLIRYGGMYAIAFAYCGTGHNDALRKLLHVAVSDGTDSVRRAAVTCIGFVLSRQPEKCPKAIALLAESYNPHVRYGAAFALGIACAGTGQRDALEILKSLTTDSVGYVKQAAWISMAMVLIQTSKELVPEAETARKLFATCISDKREDSMSKFGAVLAFGVIDAGGRNSTIQLHSPSGHKNMNAIVGIAGFLQFWYWFPMTHFMGLALTPTSIIGLNKNLEMPVFTFKSNCRPSLFAYPPETKPSTTSSTNKIETAILSYSRKNKLQSSRSAMNIDQDVEKKEKEEKEAKEKEAKEKEEKEAAKAEEKEPLFERKSNPARIVPRQLQYVQFDDARYQPIKKSPAIGIVMLRDLTPNEPEQLVVKEKPETKQETVGNQSGTATATASLPNATTTTSPTLPEPSTPEPFEFTE.

Positions 272–303 (EKKSTTTTTTTPASDSMEIDIDSGNEKSGGSS) are disordered. PC repeat units lie at residues 393-426 (SAIS…NQTP), 431-464 (GSLY…ILHH), 465-499 (GASL…VSGE), 500-534 (AAGL…EKTI), 536-569 (SLSM…LIRY), 570-605 (GGMY…SVRR), 606-638 (AAVT…PHVR), 640-674 (GAAF…YVKQ), 675-715 (AAWI…DSMS), and 718-748 (GAVL…NMNA). 2 disordered regions span residues 832-882 (SSRS…KSNP) and 922-975 (PEQL…EFTE). Basic and acidic residues-rich tracts occupy residues 842–880 (DVEK…ERKS) and 926–935 (VVKEKPETKQ). Residues 944–961 (TATATASLPNATTTTSPT) show a composition bias toward low complexity.

The protein belongs to the proteasome subunit S1 family.

Its function is as follows. Acts as a regulatory subunit of the 26 proteasome which is involved in the ATP-dependent degradation of ubiquitinated proteins. The sequence is that of 26S proteasome non-ATPase regulatory subunit 1 (psmD1) from Dictyostelium discoideum (Social amoeba).